The chain runs to 355 residues: UDP-N-acetylglucosamine--N-acetylmuramyl-(pentapeptide) pyrophosphoryl-undecaprenol N-acetylglucosamine transferase (355 aa).

Residues 14-16, Asn-126, Arg-164, Ser-190, Ile-243, 262-267, and Gln-288 each bind UDP-N-acetyl-alpha-D-glucosamine; these read TGG and ALTVAE.

It belongs to the glycosyltransferase 28 family. MurG subfamily.

The protein localises to the cell inner membrane. It catalyses the reaction di-trans,octa-cis-undecaprenyl diphospho-N-acetyl-alpha-D-muramoyl-L-alanyl-D-glutamyl-meso-2,6-diaminopimeloyl-D-alanyl-D-alanine + UDP-N-acetyl-alpha-D-glucosamine = di-trans,octa-cis-undecaprenyl diphospho-[N-acetyl-alpha-D-glucosaminyl-(1-&gt;4)]-N-acetyl-alpha-D-muramoyl-L-alanyl-D-glutamyl-meso-2,6-diaminopimeloyl-D-alanyl-D-alanine + UDP + H(+). It participates in cell wall biogenesis; peptidoglycan biosynthesis. Cell wall formation. Catalyzes the transfer of a GlcNAc subunit on undecaprenyl-pyrophosphoryl-MurNAc-pentapeptide (lipid intermediate I) to form undecaprenyl-pyrophosphoryl-MurNAc-(pentapeptide)GlcNAc (lipid intermediate II). This Psychromonas ingrahamii (strain DSM 17664 / CCUG 51855 / 37) protein is UDP-N-acetylglucosamine--N-acetylmuramyl-(pentapeptide) pyrophosphoryl-undecaprenol N-acetylglucosamine transferase.